A 318-amino-acid polypeptide reads, in one-letter code: HPr kinase/phosphorylase (318 aa).

Catalysis depends on residues histidine 143 and lysine 164. 158 to 165 (GKSGVGKS) contributes to the ATP binding site. Residue serine 165 participates in Mg(2+) binding. Aspartate 182 serves as the catalytic Proton acceptor; for phosphorylation activity. Proton donor; for dephosphorylation activity. The segment at 206–215 (MEIRGLGILN) is important for the catalytic mechanism of both phosphorylation and dephosphorylation. Glutamate 207 is a Mg(2+) binding site. Arginine 248 is an active-site residue. The important for the catalytic mechanism of dephosphorylation stretch occupies residues 269-274 (PVKPGR).

It belongs to the HPrK/P family. As to quaternary structure, homohexamer. Mg(2+) is required as a cofactor.

It carries out the reaction [HPr protein]-L-serine + ATP = [HPr protein]-O-phospho-L-serine + ADP + H(+). The catalysed reaction is [HPr protein]-O-phospho-L-serine + phosphate + H(+) = [HPr protein]-L-serine + diphosphate. Catalyzes the ATP- as well as the pyrophosphate-dependent phosphorylation of a specific serine residue in HPr, a phosphocarrier protein of the phosphoenolpyruvate-dependent sugar phosphotransferase system (PTS). HprK/P also catalyzes the pyrophosphate-producing, inorganic phosphate-dependent dephosphorylation (phosphorolysis) of seryl-phosphorylated HPr (P-Ser-HPr). The chain is HPr kinase/phosphorylase from Leptospira borgpetersenii serovar Hardjo-bovis (strain L550).